Reading from the N-terminus, the 145-residue chain is 6-pyruvoyl tetrahydrobiopterin synthase (145 aa).

Serine 19 carries the phosphoserine; by PKG modification. Histidine 24 serves as a coordination point for Zn(2+). Serine 28 is subject to Phosphoserine. Cysteine 43 serves as the catalytic Proton acceptor. Residues histidine 49 and histidine 51 each coordinate Zn(2+). Residue histidine 90 is the Charge relay system of the active site. Tyrosine 128 bears the Phosphotyrosine mark. The active-site Charge relay system is glutamate 134.

This sequence belongs to the PTPS family. Homohexamer formed of two homotrimers in a head to head fashion. Zn(2+) serves as cofactor. In terms of processing, phosphorylation of Ser-19 is required for maximal enzyme activity.

The enzyme catalyses 7,8-dihydroneopterin 3'-triphosphate = 6-pyruvoyl-5,6,7,8-tetrahydropterin + triphosphate + H(+). Its pathway is cofactor biosynthesis; tetrahydrobiopterin biosynthesis; tetrahydrobiopterin from 7,8-dihydroneopterin triphosphate: step 1/3. Its function is as follows. Involved in the biosynthesis of tetrahydrobiopterin, an essential cofactor of aromatic amino acid hydroxylases. Catalyzes the transformation of 7,8-dihydroneopterin triphosphate into 6-pyruvoyl tetrahydropterin. The sequence is that of 6-pyruvoyl tetrahydrobiopterin synthase (PTS) from Homo sapiens (Human).